We begin with the raw amino-acid sequence, 783 residues long: MLLGFRRGRRSHFKHIIHGLLPAASVAPKAAVPRTPPPRSPNPSPERPRSALAAAILATTLTGRTVAIPQPRQRSRSESDVSSVEQDSFIEPYATTSQLRPRPNWQSEMGRRSSLPSFETLDYGDEEDIETQLSSSGKELGDVSAREDRGGHSDDLYAVPHRNQVPLLHEVNSEDDENISHQDGFPGSPPAPQRTQQKDGKHPVLNLKDEKPPLCEKPPPSPDITGRARQRYTEITREKFEALKEENMDLNNMNQSLTLELNTMKQAMKELQLKLKGMEKEKRKLKEAEKASSQEVAAPELLYLRKQAQELVDENDGLKMTVHRLNVELSRYQTKFRHLSKEESLNIEGLPSKGPIPPWLLDIKYLSPLLLAYEDMMKEKDELNATLKEEMRMFRMRVQEVVKENEELHQELNKSSAVTSEEWRQLQTQAKLVLEENKLLLEQLEIQQRKAKDSHQERLQEVSKLTKQLMLLEAKTHGQEKELAENREQLEILRAKCQELKTHSDGKIAVEVHKSIVNELKSQLQKEEEKERAEMEELMEKLTVLQAQKKSLLLEKNSLTEQNKALEAELERAQKINRKSQKKIEVLKKQVEKAMGNEMSAHQYLANLVGLAENITQERDSLMCLAKCLESEKDGVLNKVIKSNIRLGKLEEKVKGYKKQAALKLGDISHRLLEQQEDFAGKTAQYRQEMRHLHQVLKDKQEVLDQALQQNREMEGELEVIWESTFRENRRIRELLQDTLTRTGVQDNPRALVAPSLNGVSQADLLDGCDVCSYDLKSHAPTC.

Positions 28 to 49 are disordered; the sequence is PKAAVPRTPPPRSPNPSPERPR. Pro residues predominate over residues 34 to 45; the sequence is RTPPPRSPNPSP. Serine 50 bears the Phosphoserine mark. Disordered regions lie at residues 63–157 and 176–226; these read GRTV…DDLY and DENI…DITG. Residues 94-107 are compositionally biased toward polar residues; sequence ATTSQLRPRPNWQS. Composition is skewed to basic and acidic residues over residues 139–155 and 196–214; these read ELGDVSAREDRGGHSDD and QQKDGKHPVLNLKDEKPPL. 2 coiled-coil regions span residues 234-333 and 369-719; these read EITR…SRYQ and LLLA…GELE.

It is found in the cytoplasm. Its subcellular location is the cytosol. The protein resides in the cytoskeleton. It localises to the microtubule organizing center. The protein localises to the centrosome. It is found in the spindle pole. Its subcellular location is the centriole. The protein resides in the mitochondrion intermembrane space. Required for ciliogenesis. Also plays a role in mitochondrial metabolism where it may modulate complex IV activity. This is Centrosomal protein of 89 kDa (CEP89) from Homo sapiens (Human).